Here is a 398-residue protein sequence, read N- to C-terminus: Basic helix-loop-helix neural transcription factor TAP (398 aa).

Disordered stretches follow at residues 35 to 59 and 102 to 144; these read ETEA…IPQP and RATN…RSRS. Residues 127 to 141 show a composition bias toward basic residues; it reads RPKRKYAVGKNRVTR. The region spanning 154–206 is the bHLH domain; sequence FRRMKANDRERNRMHNLNDALEKLRVTLPSLPEETKLTKIEILRFAHNYIFAL. Disordered regions lie at residues 265–333 and 361–398; these read AQHQ…QQFS and QQSS…APQV. The span at 307–333 shows a compositional bias: low complexity; sequence HQQQQQPHQPHHLQPNPQQESSPQQFS. Residues 361–370 are compositionally biased toward polar residues; that stretch reads QQSSFYSQTP.

As to expression, expressed in neuronal and glial precursors during differentiation. In the peripheral nervous system, expression is exclusively in one of the neurons that innervate each larval chemosensory organ. Expressed at a late stage in the development of one type of adult chemosensory organ, the gustatory bristles of the leg, wing and proboscis. Expressed very early in the development of a second type of chemosensory receptors, the olfactory organs of the antenna.

The protein resides in the nucleus. Functionally, may play a role in the specification of the sugar-sensitive adult gustatory neuron and affect the response to sugar and salt. Regulated by POXN. This is Basic helix-loop-helix neural transcription factor TAP (tap) from Drosophila melanogaster (Fruit fly).